We begin with the raw amino-acid sequence, 227 residues long: Brain acid soluble protein 1 (227 aa).

The span at 1–11 shows a compositional bias: basic residues; it reads MGGKLSKKKKG. Positions 1-227 are disordered; it reads MGGKLSKKKK…NSDQTVTVKE (227 aa). Gly-2 is lipidated: N-myristoyl glycine. Over residues 15–27 the composition is skewed to basic and acidic residues; sequence NDEKAKEKDKKAE. Residue Lys-25 forms a Glycyl lysine isopeptide (Lys-Gly) (interchain with G-Cter in SUMO2) linkage. 2 positions are modified to phosphothreonine: Thr-31 and Thr-36. Ser-40 is modified (phosphoserine). The segment covering 49-105 has biased composition (basic and acidic residues); sequence AEAKEGKEKPDQDAEGKAEEKEGEKDAAAAKEEAPKAEPEKTEGAAEAKAEPPKAPE. Residues Lys-84 and Lys-97 each participate in a glycyl lysine isopeptide (Lys-Gly) (interchain with G-Cter in SUMO2) cross-link. Residues 106–139 show a composition bias toward low complexity; it reads QEQAAPGPAAGGEAPKAAEAAAAPAESAAPAAGE. Basic and acidic residues predominate over residues 140-152; that stretch reads EPSKEEGEPKKTE. Lys-163 participates in a covalent cross-link: Glycyl lysine isopeptide (Lys-Gly) (interchain with G-Cter in SUMO2). A phosphoserine mark is found at Ser-164, Ser-170, Ser-172, Ser-176, and Ser-195. Residues 173–185 show a composition bias toward polar residues; it reads KPGSSEAAPSSKE. Thr-196 is subject to Phosphothreonine. Phosphoserine occurs at positions 205 and 219. Residues 218 to 227 are compositionally biased toward polar residues; the sequence is NSDQTVTVKE.

As to expression, brain.

Its subcellular location is the cell membrane. It localises to the cell projection. It is found in the growth cone. This is Brain acid soluble protein 1 (BASP1) from Homo sapiens (Human).